The following is a 101-amino-acid chain: uncharacterized protein (101 aa).

This is an uncharacterized protein from Saccharomyces cerevisiae (strain ATCC 204508 / S288c) (Baker's yeast).